The chain runs to 31 residues: MSDIN-like toxin proprotein 4 (31 aa).

A propeptide spanning residues methionine 1–proline 10 is cleaved from the precursor. Residues tryptophan 11–proline 16 constitute a cross-link (cyclopeptide (Trp-Pro)). Residues cysteine 17–arginine 31 constitute a propeptide that is removed on maturation.

Belongs to the MSDIN fungal toxin family. In terms of processing, processed by the macrocyclase-peptidase enzyme POPB to yield a toxic cyclic hexapeptide. POPB first removes 10 residues from the N-terminus. Conformational trapping of the remaining peptide forces the enzyme to release this intermediate rather than proceed to macrocyclization. The enzyme rebinds the remaining peptide in a different conformation and catalyzes macrocyclization of the N-terminal 6 residues.

Its function is as follows. Probable toxin that belongs to the MSDIN-like toxin family responsible for a large number of food poisoning cases and deaths. This chain is MSDIN-like toxin proprotein 4, found in Amanita phalloides (Death cap).